Consider the following 224-residue polypeptide: uncharacterized protein (224 aa).

The Zn(2+) site is built by His57, His59, Asp61, His62, His138, Asp162, and His203.

This sequence belongs to the metallo-beta-lactamase superfamily. Glyoxalase II family. Zn(2+) is required as a cofactor.

This is an uncharacterized protein from Mycobacterium tuberculosis (strain CDC 1551 / Oshkosh).